Reading from the N-terminus, the 685-residue chain is Protein DIA2 (685 aa).

3 TPR repeats span residues 6–39, 70–103, and 104–137; these read IDRSLELGIQCFQGEDYKGAAELFSKSLQLARSY, LVLLDNRAATWEKLNKLDRALADAAYMITVDAYN, and LKGYIRRGKVLQKLGRYEEALQVYENGLKQAGEA. The F-box domain maps to 207 to 254; that stretch reads IDYIATLPVEIIERIMANMDTRSIIRCYSVCKLWKYRLERLPHLYQEF. LRR repeat units follow at residues 300-323, 353-377, 454-480, 499-517, 518-542, 562-585, and 598-622; these read ILLLSRLMIGTRQLALMAKKCKAE, KLNLHELYTRTTSMTHLELVLNFHT, MPNLQELWLERNTGIEFHELITQIVQV, FDRMDQSQLGLGEEALREV, FQSLESLDLMNTRFDPQLLLLLLQP, ARDLEILTLIFQQLPALTDLLLPN, and RKNIKGMKLKRLDLSFIPSLKGYEL.

This sequence belongs to the DIA2 family. In terms of assembly, forms a SCF ubiquitin ligase complex which binds to DNA replication origins.

The protein localises to the nucleus. F-box protein component of a SCF ubiquitin ligase complex involved in ubiquitin-dependent protein degradation. The SCF-DIA2 complex is specifically involved in the pheromone induced degradation of phosphorylated TEC1. Involved in DNA replication, genome stability, and the control of cell cycle, probably through its association to replication origins to facilitate the ubiquitination of another origin-binding protein. In Eremothecium gossypii (strain ATCC 10895 / CBS 109.51 / FGSC 9923 / NRRL Y-1056) (Yeast), this protein is Protein DIA2 (DIA2).